The sequence spans 416 residues: MKIYLVGGAVRDSLLNLPIKDKDYLVVGATPEQMLQLGYRQVGKDFPVFLHPKNQQEYALARTERKIGLGYGGFSCHASPDVTLEQDLLRRDLTINAIAQDEKGNLYDPFNGIEDINARLLRHVSDAFVEDPLRVLRVARFAARFHALGFHIAAETLALMRQISASDELNALTAERVWQEVDKSLGGPHPEVFFEVLHQCGALEVLFPEIFALFGVPQPEKWHPEIDTGVHTLMVLAQAALLTEDKSVRFAALVHDLGKALSPKEHLPKHHGHGQKGLPLIKALCTRLRVPNETRDLALLVSDQHQNVHQAFELRAETIVKIFDKADFWRKPERLTQLILACIADMRGRTGFENNPYPQGEYLTQCFLAANNVDIAAIIAAGFQGAEIKQALNLRRIEAVSQFKQKMQTKLPTDEQ.

G8 and R11 together coordinate ATP. The CTP site is built by G8 and R11. Mg(2+)-binding residues include D21 and D23. Residues R91, R137, and R140 each coordinate ATP. Positions 91, 137, and 140 each coordinate CTP. In terms of domain architecture, HD spans 228–329 (TGVHTLMVLA…VKIFDKADFW (102 aa)).

Belongs to the tRNA nucleotidyltransferase/poly(A) polymerase family. Bacterial CCA-adding enzyme type 1 subfamily. Monomer. Can also form homodimers and oligomers. The cofactor is Mg(2+). Ni(2+) is required as a cofactor.

It catalyses the reaction a tRNA precursor + 2 CTP + ATP = a tRNA with a 3' CCA end + 3 diphosphate. The catalysed reaction is a tRNA with a 3' CCA end + 2 CTP + ATP = a tRNA with a 3' CCACCA end + 3 diphosphate. Its function is as follows. Catalyzes the addition and repair of the essential 3'-terminal CCA sequence in tRNAs without using a nucleic acid template. Adds these three nucleotides in the order of C, C, and A to the tRNA nucleotide-73, using CTP and ATP as substrates and producing inorganic pyrophosphate. tRNA 3'-terminal CCA addition is required both for tRNA processing and repair. Also involved in tRNA surveillance by mediating tandem CCA addition to generate a CCACCA at the 3' terminus of unstable tRNAs. While stable tRNAs receive only 3'-terminal CCA, unstable tRNAs are marked with CCACCA and rapidly degraded. This chain is Multifunctional CCA protein, found in Shewanella baltica (strain OS155 / ATCC BAA-1091).